Consider the following 122-residue polypeptide: Large ribosomal subunit protein uL18 (122 aa).

Residues 1–24 are disordered; sequence MLKKADKNANRLQRHKRVRRKISG. Residues 12–22 are compositionally biased toward basic residues; that stretch reads LQRHKRVRRKI.

Belongs to the universal ribosomal protein uL18 family. As to quaternary structure, part of the 50S ribosomal subunit; part of the 5S rRNA/L5/L18/L25 subcomplex. Contacts the 5S and 23S rRNAs.

Functionally, this is one of the proteins that bind and probably mediate the attachment of the 5S RNA into the large ribosomal subunit, where it forms part of the central protuberance. The sequence is that of Large ribosomal subunit protein uL18 from Clostridioides difficile (strain 630) (Peptoclostridium difficile).